Reading from the N-terminus, the 115-residue chain is Large ribosomal subunit protein uL22 (115 aa).

It belongs to the universal ribosomal protein uL22 family. Part of the 50S ribosomal subunit.

This protein binds specifically to 23S rRNA; its binding is stimulated by other ribosomal proteins, e.g. L4, L17, and L20. It is important during the early stages of 50S assembly. It makes multiple contacts with different domains of the 23S rRNA in the assembled 50S subunit and ribosome. In terms of biological role, the globular domain of the protein is located near the polypeptide exit tunnel on the outside of the subunit, while an extended beta-hairpin is found that lines the wall of the exit tunnel in the center of the 70S ribosome. In Thioalkalivibrio sulfidiphilus (strain HL-EbGR7), this protein is Large ribosomal subunit protein uL22.